A 299-amino-acid polypeptide reads, in one-letter code: tRNA dimethylallyltransferase (299 aa).

Position 22–29 (22–29 (GPTASGKT)) interacts with ATP. Residue 24–29 (TASGKT) coordinates substrate. Interaction with substrate tRNA regions lie at residues 47–50 (DSRQ) and 172–176 (QRLLR).

The protein belongs to the IPP transferase family. Monomer. It depends on Mg(2+) as a cofactor.

The enzyme catalyses adenosine(37) in tRNA + dimethylallyl diphosphate = N(6)-dimethylallyladenosine(37) in tRNA + diphosphate. Catalyzes the transfer of a dimethylallyl group onto the adenine at position 37 in tRNAs that read codons beginning with uridine, leading to the formation of N6-(dimethylallyl)adenosine (i(6)A). This Endomicrobium trichonymphae protein is tRNA dimethylallyltransferase.